The sequence spans 54 residues: Ovomucoid (54 aa).

Positions 4–54 (VDCSGYPTHACTLELKPLCGSDNQTYSNKCGFCNAVAQSNGTLTLSHFGKC) constitute a Kazal-like domain. Intrachain disulfides connect cysteine 6-cysteine 36, cysteine 14-cysteine 33, and cysteine 22-cysteine 54. N-linked (GlcNAc...) asparagine glycosylation occurs at asparagine 43.

The protein resides in the secreted. This Leipoa ocellata (Malleefowl) protein is Ovomucoid.